A 411-amino-acid polypeptide reads, in one-letter code: Phosphoribosylaminoimidazole-succinocarboxamide synthase, chloroplastic (411 aa).

The N-terminal 53 residues, 1-53, are a transit peptide targeting the chloroplast; it reads MAQCVRSTLNPVRTPQSFTRKAYVKSPAFASVSFLRAVPEFNKYPKPCSLVMS.

The protein belongs to the SAICAR synthetase family.

The protein localises to the plastid. Its subcellular location is the chloroplast. The catalysed reaction is 5-amino-1-(5-phospho-D-ribosyl)imidazole-4-carboxylate + L-aspartate + ATP = (2S)-2-[5-amino-1-(5-phospho-beta-D-ribosyl)imidazole-4-carboxamido]succinate + ADP + phosphate + 2 H(+). It participates in purine metabolism; IMP biosynthesis via de novo pathway; 5-amino-1-(5-phospho-D-ribosyl)imidazole-4-carboxamide from 5-amino-1-(5-phospho-D-ribosyl)imidazole-4-carboxylate: step 1/2. This chain is Phosphoribosylaminoimidazole-succinocarboxamide synthase, chloroplastic (PUR7), found in Arabidopsis thaliana (Mouse-ear cress).